A 770-amino-acid chain; its full sequence is Coiled-coil alpha-helical rod protein 1 (770 aa).

3 coiled-coil regions span residues 56–289 (STVT…DLQA), 334–420 (LRNW…RQEQ), and 476–669 (GLMA…RKEE). Disordered stretches follow at residues 573-592 (LEAA…SLRQ), 641-672 (LRQI…EGQR), 700-721 (NKKC…AASC), and 744-770 (SRDE…PLLS). Residues 648–672 (ATQEKERNQELRRLQDEARKEEGQR) are compositionally biased toward basic and acidic residues. Residues 701-721 (KKCSPRSVESSSSESPAAASC) show a composition bias toward low complexity.

The protein localises to the cytoplasm. It localises to the nucleus. May be a regulator of keratinocyte proliferation or differentiation. This chain is Coiled-coil alpha-helical rod protein 1 (Cchcr1), found in Mus musculus (Mouse).